Consider the following 68-residue polypeptide: Putative membrane protein insertion efficiency factor (68 aa).

The protein belongs to the UPF0161 family.

The protein localises to the cell membrane. Functionally, could be involved in insertion of integral membrane proteins into the membrane. This is Putative membrane protein insertion efficiency factor from Herpetosiphon aurantiacus (strain ATCC 23779 / DSM 785 / 114-95).